Consider the following 213-residue polypeptide: ATP phosphoribosyltransferase (213 aa).

This sequence belongs to the ATP phosphoribosyltransferase family. Short subfamily. As to quaternary structure, heteromultimer composed of HisG and HisZ subunits.

It localises to the cytoplasm. The catalysed reaction is 1-(5-phospho-beta-D-ribosyl)-ATP + diphosphate = 5-phospho-alpha-D-ribose 1-diphosphate + ATP. Its pathway is amino-acid biosynthesis; L-histidine biosynthesis; L-histidine from 5-phospho-alpha-D-ribose 1-diphosphate: step 1/9. Catalyzes the condensation of ATP and 5-phosphoribose 1-diphosphate to form N'-(5'-phosphoribosyl)-ATP (PR-ATP). Has a crucial role in the pathway because the rate of histidine biosynthesis seems to be controlled primarily by regulation of HisG enzymatic activity. In Bacillus pumilus (strain SAFR-032), this protein is ATP phosphoribosyltransferase.